The sequence spans 430 residues: Adenylosuccinate synthetase (430 aa).

GTP-binding positions include 13 to 19 (GDEGKGK) and 41 to 43 (GHT). Asp-14 serves as the catalytic Proton acceptor. Residues Asp-14 and Gly-41 each contribute to the Mg(2+) site. IMP-binding positions include 14 to 17 (DEGK), 39 to 42 (NAGH), Thr-130, Arg-144, Gln-225, Thr-240, and Arg-304. The active-site Proton donor is the His-42. Position 300–306 (300–306 (ASTGRPR)) interacts with substrate. Residues Arg-306, 332 to 334 (KLD), and 414 to 416 (STG) each bind GTP.

It belongs to the adenylosuccinate synthetase family. As to quaternary structure, homodimer. Mg(2+) is required as a cofactor.

It is found in the cytoplasm. The enzyme catalyses IMP + L-aspartate + GTP = N(6)-(1,2-dicarboxyethyl)-AMP + GDP + phosphate + 2 H(+). Its pathway is purine metabolism; AMP biosynthesis via de novo pathway; AMP from IMP: step 1/2. In terms of biological role, plays an important role in the de novo pathway of purine nucleotide biosynthesis. Catalyzes the first committed step in the biosynthesis of AMP from IMP. This chain is Adenylosuccinate synthetase, found in Xylella fastidiosa (strain 9a5c).